We begin with the raw amino-acid sequence, 266 residues long: Putative carbamate hydrolase RutD (266 aa).

This sequence belongs to the AB hydrolase superfamily. Hydrolase RutD family.

It catalyses the reaction carbamate + 2 H(+) = NH4(+) + CO2. Its function is as follows. Involved in pyrimidine catabolism. May facilitate the hydrolysis of carbamate, a reaction that can also occur spontaneously. This chain is Putative carbamate hydrolase RutD, found in Escherichia coli O127:H6 (strain E2348/69 / EPEC).